A 301-amino-acid polypeptide reads, in one-letter code: Ornithine carbamoyltransferase (301 aa).

Residues Arg-100 and 127–130 (HPCQ) contribute to the carbamoyl phosphate site. Residues Asn-158, Asp-221, and 225-226 (SM) each bind L-ornithine. Residues 260–261 (CL) and Arg-288 contribute to the carbamoyl phosphate site.

This sequence belongs to the aspartate/ornithine carbamoyltransferase superfamily. OTCase family.

It is found in the cytoplasm. The catalysed reaction is carbamoyl phosphate + L-ornithine = L-citrulline + phosphate + H(+). The protein operates within amino-acid biosynthesis; L-arginine biosynthesis; L-arginine from L-ornithine and carbamoyl phosphate: step 1/3. In terms of biological role, reversibly catalyzes the transfer of the carbamoyl group from carbamoyl phosphate (CP) to the N(epsilon) atom of ornithine (ORN) to produce L-citrulline. The polypeptide is Ornithine carbamoyltransferase (Shewanella oneidensis (strain ATCC 700550 / JCM 31522 / CIP 106686 / LMG 19005 / NCIMB 14063 / MR-1)).